We begin with the raw amino-acid sequence, 486 residues long: Bifunctional protein GlmU (486 aa).

Residues 1-236 (MTDQNLAIVV…SWLVDGINDR (236 aa)) form a pyrophosphorylase region. UDP-N-acetyl-alpha-D-glucosamine contacts are provided by residues 11-14 (LAAG), Lys25, Gln78, and 83-84 (GT). Asp109 serves as a coordination point for Mg(2+). Residues Gly146, Glu161, Asn176, and Asn234 each contribute to the UDP-N-acetyl-alpha-D-glucosamine site. Asn234 provides a ligand contact to Mg(2+). The segment at 237-257 (AQLSEAAAKLNALTVRAWQLA) is linker. Residues 258–486 (GVTVQDPATT…ASNAAEESGE (229 aa)) are N-acetyltransferase. UDP-N-acetyl-alpha-D-glucosamine-binding residues include Arg339 and Lys357. His369 (proton acceptor) is an active-site residue. UDP-N-acetyl-alpha-D-glucosamine-binding residues include Tyr372 and Asn383. Residues Ala386, 392 to 393 (NY), and Ala429 contribute to the acetyl-CoA site. Residues 459 to 486 (RRPGTDAARAAQRNGAAEASNAAEESGE) form a disordered region. Residues 465–486 (AARAAQRNGAAEASNAAEESGE) are compositionally biased toward low complexity.

In the N-terminal section; belongs to the N-acetylglucosamine-1-phosphate uridyltransferase family. This sequence in the C-terminal section; belongs to the transferase hexapeptide repeat family. In terms of assembly, homotrimer. Requires Mg(2+) as cofactor.

Its subcellular location is the cytoplasm. It catalyses the reaction alpha-D-glucosamine 1-phosphate + acetyl-CoA = N-acetyl-alpha-D-glucosamine 1-phosphate + CoA + H(+). It carries out the reaction N-acetyl-alpha-D-glucosamine 1-phosphate + UTP + H(+) = UDP-N-acetyl-alpha-D-glucosamine + diphosphate. The protein operates within nucleotide-sugar biosynthesis; UDP-N-acetyl-alpha-D-glucosamine biosynthesis; N-acetyl-alpha-D-glucosamine 1-phosphate from alpha-D-glucosamine 6-phosphate (route II): step 2/2. Its pathway is nucleotide-sugar biosynthesis; UDP-N-acetyl-alpha-D-glucosamine biosynthesis; UDP-N-acetyl-alpha-D-glucosamine from N-acetyl-alpha-D-glucosamine 1-phosphate: step 1/1. It participates in bacterial outer membrane biogenesis; LPS lipid A biosynthesis. Functionally, catalyzes the last two sequential reactions in the de novo biosynthetic pathway for UDP-N-acetylglucosamine (UDP-GlcNAc). The C-terminal domain catalyzes the transfer of acetyl group from acetyl coenzyme A to glucosamine-1-phosphate (GlcN-1-P) to produce N-acetylglucosamine-1-phosphate (GlcNAc-1-P), which is converted into UDP-GlcNAc by the transfer of uridine 5-monophosphate (from uridine 5-triphosphate), a reaction catalyzed by the N-terminal domain. In Leifsonia xyli subsp. xyli (strain CTCB07), this protein is Bifunctional protein GlmU.